An 89-amino-acid polypeptide reads, in one-letter code: Small ribosomal subunit protein uS17 (89 aa).

The protein belongs to the universal ribosomal protein uS17 family. In terms of assembly, part of the 30S ribosomal subunit.

Its function is as follows. One of the primary rRNA binding proteins, it binds specifically to the 5'-end of 16S ribosomal RNA. This chain is Small ribosomal subunit protein uS17, found in Delftia acidovorans (strain DSM 14801 / SPH-1).